The sequence spans 122 residues: Large ribosomal subunit protein uL14 (122 aa).

The protein belongs to the universal ribosomal protein uL14 family. In terms of assembly, part of the 50S ribosomal subunit. Forms a cluster with proteins L3 and L19. In the 70S ribosome, L14 and L19 interact and together make contacts with the 16S rRNA in bridges B5 and B8.

Functionally, binds to 23S rRNA. Forms part of two intersubunit bridges in the 70S ribosome. The chain is Large ribosomal subunit protein uL14 from Trichlorobacter lovleyi (strain ATCC BAA-1151 / DSM 17278 / SZ) (Geobacter lovleyi).